Consider the following 551-residue polypeptide: Dol-P-Man:Man(7)GlcNAc(2)-PP-Dol alpha-1,6-mannosyltransferase (551 aa).

Residues 1–2 (MR) are Lumenal-facing. The chain crosses the membrane as a helical span at residues 3–23 (WSVLDTVLLTVISFHLIQAPF). Topologically, residues 24 to 61 (TKVEESFNIQAIHDILTYSVFDISQYDHLKFPGVVPRT) are cytoplasmic. Residues 62 to 82 (FVGAVIIAMLSRPYLYLSSLI) traverse the membrane as a helical segment. Residues 83 to 89 (QTSRPTS) are Lumenal-facing. The helical transmembrane segment at 90-110 (IDVQLVVRGIVGLTNGLSFIY) threads the bilayer. Over 111–136 (LKNCLQDMFDEITEKKKEENEDKDIY) the chain is Cytoplasmic. Residues 137-157 (IYDSAGTWFLLFLIGSFHLMF) form a helical membrane-spanning segment. At 158–178 (YSTRTLPNFVMTLPLTNVALG) the chain is on the lumenal side. Residues 179 to 199 (WVLLGRYNAAIFLSALVAIVF) form a helical membrane-spanning segment. The Cytoplasmic segment spans residues 200-202 (RLE). A helical transmembrane segment spans residues 203–223 (VSALSAGIALFSVIFKKISLF). Over 224 to 227 (DAIK) the chain is Lumenal. A helical transmembrane segment spans residues 228-248 (FGIFGLGLGSAISITVDSYFW). The Cytoplasmic segment spans residues 249-275 (QEWCLPEVDGFLFNVVAGYASKWGVEP). Residues 276 to 296 (VTAYFTHYLRMMFMPPTVLLL) form a helical membrane-spanning segment. Residues 297-303 (NYFGYKL) lie on the Lumenal side of the membrane. A helical transmembrane segment spans residues 304–324 (APAKLKIVSLASLFHIIVLSF). Over 325-331 (QPHKEWR) the chain is Cytoplasmic. The helical transmembrane segment at 332 to 352 (FIIYAVPSIMLLGATGAAHLW) threads the bilayer. At 353 to 365 (ENMKVKKITNVLC) the chain is on the lumenal side. A helical membrane pass occupies residues 366-386 (LAILPLSIMTSFFISMAFLYI). The Cytoplasmic segment spans residues 387 to 417 (SRMNYPGGEALTSFNDMIVEKNITNATVHIS). Residues 418–438 (IPPCMTGVTLFGELNYGVYGI) form a helical membrane-spanning segment. At 439-551 (NYDKTENTTL…KRIKQDEKTD (113 aa)) the chain is on the lumenal side.

Belongs to the glycosyltransferase 22 family.

The protein localises to the endoplasmic reticulum membrane. It catalyses the reaction an alpha-D-Man-(1-&gt;2)-alpha-D-Man-(1-&gt;2)-alpha-D-Man-(1-&gt;3)-[alpha-D-Man-(1-&gt;2)-alpha-D-Man-(1-&gt;3)-alpha-D-Man-(1-&gt;6)]-beta-D-Man-(1-&gt;4)-beta-D-GlcNAc-(1-&gt;4)-alpha-D-GlcNAc-diphospho-di-trans,poly-cis-dolichol + a di-trans,poly-cis-dolichyl beta-D-mannosyl phosphate = an alpha-D-Man-(1-&gt;2)-alpha-D-Man-(1-&gt;2)-alpha-D-Man-(1-&gt;3)-[alpha-D-Man-(1-&gt;2)-alpha-D-Man-(1-&gt;3)-[alpha-D-Man-(1-&gt;6)]-alpha-D-Man-(1-&gt;6)]-beta-D-Man-(1-&gt;4)-beta-D-GlcNAc-(1-&gt;4)-alpha-D-GlcNAc-diphospho-di-trans,poly-cis-dolichol + a di-trans,poly-cis-dolichyl phosphate + H(+). Its pathway is protein modification; protein glycosylation. Mannosyltransferase that operates in the biosynthetic pathway of dolichol-linked oligosaccharides, the glycan precursors employed in protein asparagine (N)-glycosylation. The assembly of dolichol-linked oligosaccharides begins on the cytosolic side of the endoplasmic reticulum membrane and finishes in its lumen. The sequential addition of sugars to dolichol pyrophosphate produces dolichol-linked oligosaccharides containing fourteen sugars, including two GlcNAcs, nine mannoses and three glucoses. Once assembled, the oligosaccharide is transferred from the lipid to nascent proteins by oligosaccharyltransferases. In the lumen of the endoplasmic reticulum, adds the eighth mannose residue in an alpha-1,6 linkage onto Man(7)GlcNAc(2)-PP-dolichol to produce Man(8)GlcNAc(2)-PP-dolichol. This is Dol-P-Man:Man(7)GlcNAc(2)-PP-Dol alpha-1,6-mannosyltransferase (ALG12) from Saccharomyces cerevisiae (strain ATCC 204508 / S288c) (Baker's yeast).